Consider the following 153-residue polypeptide: Putative pre-16S rRNA nuclease (153 aa).

It belongs to the YqgF nuclease family.

Its subcellular location is the cytoplasm. In terms of biological role, could be a nuclease involved in processing of the 5'-end of pre-16S rRNA. The sequence is that of Putative pre-16S rRNA nuclease from Koribacter versatilis (strain Ellin345).